The primary structure comprises 497 residues: Glycerol kinase (497 aa).

Thr12 is a binding site for ADP. ATP contacts are provided by Thr12, Thr13, and Ser14. Thr12 is a binding site for sn-glycerol 3-phosphate. Arg16 lines the ADP pocket. Sn-glycerol 3-phosphate-binding residues include Arg82, Glu83, Tyr134, and Asp243. Residues Arg82, Glu83, Tyr134, Asp243, and Gln244 each coordinate glycerol. Residues Thr265 and Gly308 each coordinate ADP. The ATP site is built by Thr265, Gly308, Gln312, and Gly409. ADP-binding residues include Gly409 and Asn413.

This sequence belongs to the FGGY kinase family. Homotetramer and homodimer (in equilibrium).

It carries out the reaction glycerol + ATP = sn-glycerol 3-phosphate + ADP + H(+). It functions in the pathway polyol metabolism; glycerol degradation via glycerol kinase pathway; sn-glycerol 3-phosphate from glycerol: step 1/1. Activated by phosphorylation and inhibited by fructose 1,6-bisphosphate (FBP). Its function is as follows. Key enzyme in the regulation of glycerol uptake and metabolism. Catalyzes the phosphorylation of glycerol to yield sn-glycerol 3-phosphate. This Caldanaerobacter subterraneus subsp. tengcongensis (strain DSM 15242 / JCM 11007 / NBRC 100824 / MB4) (Thermoanaerobacter tengcongensis) protein is Glycerol kinase.